We begin with the raw amino-acid sequence, 224 residues long: Putative adhesin RMA_1308 (224 aa).

The N-terminal stretch at 1 to 22 is a signal peptide; the sequence is MQKLLLIAATSATILSSSLSFA.

The chain is Putative adhesin RMA_1308 from Rickettsia massiliae (strain Mtu5).